Reading from the N-terminus, the 258-residue chain is MIMLNIGPFSFHSRLLLGTGKFPDFDVQQKAIDVSEAEVLTFAVRRMDIFDAKQPNLLEKLDVKKYTLLPNTAGAKNAEEAVRIAKLAKASGLCDMIKVEVIGDDRTLLPDPVETLKASEMLLEEGFIVLPYTSDDVVLARKLQELGVHAIMPGASPIGSGLGIVNPLNLSFIIEQATVPVIVDAGIGSPADAAFAMELGADGVLLNTAVSGAKDPIKMAQAMKLSIEAGRLGFEAGRIARKRCATASSPLEGMSVVE.

Lys98 serves as the catalytic Schiff-base intermediate with DXP. Residues Gly159, 185–186 (AG), and 207–208 (NT) each bind 1-deoxy-D-xylulose 5-phosphate.

Belongs to the ThiG family. Homotetramer. Forms heterodimers with either ThiH or ThiS.

The protein localises to the cytoplasm. The catalysed reaction is [ThiS sulfur-carrier protein]-C-terminal-Gly-aminoethanethioate + 2-iminoacetate + 1-deoxy-D-xylulose 5-phosphate = [ThiS sulfur-carrier protein]-C-terminal Gly-Gly + 2-[(2R,5Z)-2-carboxy-4-methylthiazol-5(2H)-ylidene]ethyl phosphate + 2 H2O + H(+). Its pathway is cofactor biosynthesis; thiamine diphosphate biosynthesis. Its function is as follows. Catalyzes the rearrangement of 1-deoxy-D-xylulose 5-phosphate (DXP) to produce the thiazole phosphate moiety of thiamine. Sulfur is provided by the thiocarboxylate moiety of the carrier protein ThiS. In vitro, sulfur can be provided by H(2)S. The polypeptide is Thiazole synthase (Bacillus thuringiensis subsp. konkukian (strain 97-27)).